The chain runs to 421 residues: Membrane-associated protein UidC (421 aa).

The signal sequence occupies residues 1 to 23; the sequence is MRKIVAMAVICLTAASGLTSAYA.

This sequence belongs to the outer membrane porin (Opr) (TC 1.B.25) family.

Its subcellular location is the cell outer membrane. In terms of biological role, enhances the activity of the UidB (GusB) glucuronide transporter, on its own however it has no transport activity. Glucuronide transport does not occur in strain K12 due to a variant at position 100 of the UidB (GusB, AC P0CE44, AC P0CE45) protein. This chain is Membrane-associated protein UidC (uidC), found in Escherichia coli (strain K12).